The chain runs to 692 residues: Non-hemolytic phospholipase C (692 aa).

The segment at residues 1–35 is a signal peptide (tat-type signal); sequence MISKSRRSFIRLAAGTVGATVATSMLPSSIQAALA.

The protein belongs to the bacterial phospholipase C family. Post-translationally, predicted to be exported by the Tat system. The position of the signal peptide cleavage has not been experimentally proven.

It catalyses the reaction a 1,2-diacyl-sn-glycero-3-phosphocholine + H2O = phosphocholine + a 1,2-diacyl-sn-glycerol + H(+). Functionally, hydrolyzes phosphatidylserine as well as phosphatidylcholine. The sequence is that of Non-hemolytic phospholipase C (plcN) from Pseudomonas aeruginosa (strain ATCC 15692 / DSM 22644 / CIP 104116 / JCM 14847 / LMG 12228 / 1C / PRS 101 / PAO1).